Reading from the N-terminus, the 456-residue chain is Adenylosuccinate synthetase isozyme 1 (456 aa).

The tract at residues 1–30 (MSSGWSQNDHRSYSNPPPVSGKRPRNDSGN) is disordered. Residues 41 to 47 (GDEGKGK) and 69 to 71 (GHT) each bind GTP. Asp42 functions as the Proton acceptor in the catalytic mechanism. 2 residues coordinate Mg(2+): Asp42 and Gly69. Substrate is bound at residue Asp42. Residues 42-45 (DEGK) and 67-70 (NAGH) contribute to the IMP site. Catalysis depends on His70, which acts as the Proton donor. Phosphoserine is present on Ser130. Thr162, Arg176, Asn255, Thr270, and Arg334 together coordinate IMP. 330–336 (VTTGRKR) is a binding site for substrate. GTP is bound by residues Arg336, 362-364 (KLD), and 444-447 (GVGK).

The protein belongs to the adenylosuccinate synthetase family. As to quaternary structure, homodimer. It depends on Mg(2+) as a cofactor.

It localises to the cytoplasm. It catalyses the reaction IMP + L-aspartate + GTP = N(6)-(1,2-dicarboxyethyl)-AMP + GDP + phosphate + 2 H(+). It participates in purine metabolism; AMP biosynthesis via de novo pathway; AMP from IMP: step 1/2. Its function is as follows. Component of the purine nucleotide cycle (PNC), which interconverts IMP and AMP to regulate the nucleotide levels in various tissues, and which contributes to glycolysis and ammoniagenesis. Catalyzes the first committed step in the biosynthesis of AMP from IMP. The sequence is that of Adenylosuccinate synthetase isozyme 1 (adss1) from Danio rerio (Zebrafish).